We begin with the raw amino-acid sequence, 119 residues long: Phosphoribosyl-AMP cyclohydrolase (119 aa).

Aspartate 78 contributes to the Mg(2+) binding site. Cysteine 79 serves as a coordination point for Zn(2+). 2 residues coordinate Mg(2+): aspartate 80 and aspartate 82. Cysteine 95 and cysteine 102 together coordinate Zn(2+).

It belongs to the PRA-CH family. As to quaternary structure, homodimer. Requires Mg(2+) as cofactor. Zn(2+) serves as cofactor.

It localises to the cytoplasm. The catalysed reaction is 1-(5-phospho-beta-D-ribosyl)-5'-AMP + H2O = 1-(5-phospho-beta-D-ribosyl)-5-[(5-phospho-beta-D-ribosylamino)methylideneamino]imidazole-4-carboxamide. Its pathway is amino-acid biosynthesis; L-histidine biosynthesis; L-histidine from 5-phospho-alpha-D-ribose 1-diphosphate: step 3/9. Catalyzes the hydrolysis of the adenine ring of phosphoribosyl-AMP. This is Phosphoribosyl-AMP cyclohydrolase from Jannaschia sp. (strain CCS1).